The sequence spans 393 residues: NAD(P)H-quinone oxidoreductase subunit H, chloroplastic (393 aa).

This sequence belongs to the complex I 49 kDa subunit family. In terms of assembly, NDH is composed of at least 16 different subunits, 5 of which are encoded in the nucleus.

The protein resides in the plastid. Its subcellular location is the chloroplast thylakoid membrane. It carries out the reaction a plastoquinone + NADH + (n+1) H(+)(in) = a plastoquinol + NAD(+) + n H(+)(out). The catalysed reaction is a plastoquinone + NADPH + (n+1) H(+)(in) = a plastoquinol + NADP(+) + n H(+)(out). NDH shuttles electrons from NAD(P)H:plastoquinone, via FMN and iron-sulfur (Fe-S) centers, to quinones in the photosynthetic chain and possibly in a chloroplast respiratory chain. The immediate electron acceptor for the enzyme in this species is believed to be plastoquinone. Couples the redox reaction to proton translocation, and thus conserves the redox energy in a proton gradient. The sequence is that of NAD(P)H-quinone oxidoreductase subunit H, chloroplastic from Barbarea verna (Land cress).